A 208-amino-acid polypeptide reads, in one-letter code: MSVGEGPDTKPTARGQPAAVGRVVVLSGPSAVGKSTVVRCLRERIPNLHFSVSATTRAPRPGEVDGVDYHFIDPTRFQQLIDQGELLEWAEIHGGLHRSGTLAQPVRAAAATGVPVLIEVDLAGARAIKKTMPEAVTVFLAPPSWQDLQARLIGRGTETADVIQRRLDTARIELAAQGDFDKVVVNRRLESACAELVSLLVGTAPGSP.

The Guanylate kinase-like domain occupies 21–201 (GRVVVLSGPS…ACAELVSLLV (181 aa)). 28 to 35 (GPSAVGKS) is an ATP binding site.

Belongs to the guanylate kinase family.

Its subcellular location is the cytoplasm. The catalysed reaction is GMP + ATP = GDP + ADP. In terms of biological role, essential for recycling GMP and indirectly, cGMP. The polypeptide is Guanylate kinase (gmk) (Mycobacterium bovis (strain ATCC BAA-935 / AF2122/97)).